A 432-amino-acid chain; its full sequence is MQFIKRTFPRRAFVDLLLNRFCLREFATTYSVSVSNARKLVRKRLLIADALKFKEQVNNLNEFRNKKTKSSLIRNDGFKLAKNVSSLLQKESLEKALHLLYERSNAKKTVAYNLVLQYHLAKGHYNAAWSLYNDMKKRQQKPSDHTYSILLKGFCDAIEKNKQGNFSKLREYSEKVTASALKESNNVTSNLHHIRIISKCSLKLKSMVLVSMIIPSIKQTLDFYSGSQILRLLNDFSMFNPEQREEVLKMGTNLWNYFVLECQKKGIAVDESLICSFVKLLATSNSPQVRNVGLNILTKVMGLEYQIFEDSNLRYPLPPYCDCTSRSLVTALQVIRQIQNGDLLARYWKYFEESHKFDLNLQVYHEKLRNLVQQGQAAECLNTIKRMSHNGPFPTQQTFLIVLSLCKRPKFYSYTKSFLDLAKKLNVPVEAT.

The N-terminal 33 residues, 1 to 33 (MQFIKRTFPRRAFVDLLLNRFCLREFATTYSVS), are a transit peptide targeting the mitochondrion. PPR repeat units follow at residues 108–142 (KTVAYNLVLQYHLAKGHYNAAWSLYNDMKKRQQKP), 143–179 (SDHTYSILLKGFCDAIEKNKQGNFSKLREYSEKVTAS), 360–394 (NLQVYHEKLRNLVQQGQAAECLNTIKRMSHNGPFP), and 395–429 (TQQTFLIVLSLCKRPKFYSYTKSFLDLAKKLNVPV).

The protein resides in the mitochondrion. Mitochondrial RNA-binding protein that acts as a general translation factor. Plays a critical role in the synthesis of all mitochondrial DNA-encoded oxidative phosphorylation subunits, which are essential for mitochondrial respiration. Essential for the expression of iron-sulfur cluster (ISC) proteins as well as other heme proteins related to iron-sensing, and thus plays a key role in iron homeostasis. In Schizosaccharomyces pombe (strain 972 / ATCC 24843) (Fission yeast), this protein is Pentatricopeptide repeat-containing protein 2, mitochondrial.